The primary structure comprises 312 residues: Homoserine O-acetyltransferase (312 aa).

Cys142 functions as the Acyl-thioester intermediate in the catalytic mechanism. The substrate site is built by Lys163 and Ser192. Residue His235 is the Proton acceptor of the active site. Glu237 is an active-site residue. Arg249 is a substrate binding site.

Belongs to the MetA family.

It localises to the cytoplasm. It catalyses the reaction L-homoserine + acetyl-CoA = O-acetyl-L-homoserine + CoA. The protein operates within amino-acid biosynthesis; L-methionine biosynthesis via de novo pathway; O-acetyl-L-homoserine from L-homoserine: step 1/1. Transfers an acetyl group from acetyl-CoA to L-homoserine, forming acetyl-L-homoserine. In Ruegeria pomeroyi (strain ATCC 700808 / DSM 15171 / DSS-3) (Silicibacter pomeroyi), this protein is Homoserine O-acetyltransferase.